The following is a 149-amino-acid chain: MRHRVKKKKLNRPHSQRLALMRGLARELFEHGTIITTTAKAKAVKPFVESIITKAKKAALYAKEINERSNGDPEIQALRSKNVALRREINRHFNDRKLVKKICDEIAVNYIDRNGGYTRIIKVGRRRGDAAELSILQLVETKSEENVEN.

It belongs to the bacterial ribosomal protein bL17 family. In terms of assembly, part of the 50S ribosomal subunit. Contacts protein L32.

This is Large ribosomal subunit protein bL17 from Kosmotoga olearia (strain ATCC BAA-1733 / DSM 21960 / TBF 19.5.1).